A 364-amino-acid polypeptide reads, in one-letter code: Spermidine/putrescine import ATP-binding protein PotA (364 aa).

The region spanning 5–235 (LSFKDVSKGF…PVNRFVADFI (231 aa)) is the ABC transporter domain. Residue 37-44 (GPSGCGKT) participates in ATP binding.

This sequence belongs to the ABC transporter superfamily. Spermidine/putrescine importer (TC 3.A.1.11.1) family. In terms of assembly, the complex is composed of two ATP-binding proteins (PotA), two transmembrane proteins (PotB and PotC) and a solute-binding protein (PotD).

It localises to the cell membrane. It carries out the reaction ATP + H2O + polyamine-[polyamine-binding protein]Side 1 = ADP + phosphate + polyamineSide 2 + [polyamine-binding protein]Side 1.. Its function is as follows. Part of the ABC transporter complex PotABCD involved in spermidine/putrescine import. Responsible for energy coupling to the transport system. In Staphylococcus epidermidis (strain ATCC 12228 / FDA PCI 1200), this protein is Spermidine/putrescine import ATP-binding protein PotA.